The sequence spans 203 residues: Type III effector protein HopBF1 (203 aa).

The tract at residues 1-23 is disordered; it reads MFNVSNNVAPSRYQGPSSTSVTP. Residues Ser-40, Gln-41, Lys-42, Asp-107, Ile-109, and Asp-114 each contribute to the ATP site. Asp-155 is a catalytic residue. ATP is bound at residue Gln-157.

This sequence belongs to the HopBF1 family.

Its subcellular location is the secreted. The protein localises to the host cell. It carries out the reaction L-seryl-[protein] + ATP = O-phospho-L-seryl-[protein] + ADP + H(+). Its function is as follows. Effector protein that targets and inactivates the eukaryotic molecular chaperone HSP90 during infection. HopBF1 is recognized by HSP90 as a host client. As a result, HopBF1 phosphorylates HSP90, leading to the inactivation of the HSP90 ATPase activity and chaperone function. In vitro, can phosphorylate the recombinant yeast HSP82 (HSP90) and human HSP 90-beta on Ser-108. The polypeptide is Type III effector protein HopBF1 (Ewingella americana (strain ATCC 33852 / DSM 4580 / CCUG 14506 / JCM 5911 / LMG 7869 / NCTC 12157 / CDC 1468-78)).